Here is a 362-residue protein sequence, read N- to C-terminus: 3-dehydroquinate synthase (362 aa).

Residues 71-76 (DGEQYK), 105-109 (GVIGD), 129-130 (TT), Lys142, Lys151, and 169-172 (CLKT) contribute to the NAD(+) site. Zn(2+) is bound by residues Glu184, His247, and His264.

The protein belongs to the sugar phosphate cyclases superfamily. Dehydroquinate synthase family. Requires NAD(+) as cofactor. The cofactor is Co(2+). It depends on Zn(2+) as a cofactor.

The protein resides in the cytoplasm. It carries out the reaction 7-phospho-2-dehydro-3-deoxy-D-arabino-heptonate = 3-dehydroquinate + phosphate. It functions in the pathway metabolic intermediate biosynthesis; chorismate biosynthesis; chorismate from D-erythrose 4-phosphate and phosphoenolpyruvate: step 2/7. Catalyzes the conversion of 3-deoxy-D-arabino-heptulosonate 7-phosphate (DAHP) to dehydroquinate (DHQ). The sequence is that of 3-dehydroquinate synthase from Salmonella typhi.